The following is a 1293-amino-acid chain: DNA-directed RNA polymerase subunit beta' (1293 aa).

Positions 60, 62, 75, and 78 each coordinate Zn(2+). Residues D535, D537, and D539 each coordinate Mg(2+). Positions 873, 950, 957, and 960 each coordinate Zn(2+).

This sequence belongs to the RNA polymerase beta' chain family. As to quaternary structure, the RNAP catalytic core consists of 2 alpha, 1 beta, 1 beta' and 1 omega subunit. When a sigma factor is associated with the core the holoenzyme is formed, which can initiate transcription. The cofactor is Mg(2+). Zn(2+) is required as a cofactor.

The enzyme catalyses RNA(n) + a ribonucleoside 5'-triphosphate = RNA(n+1) + diphosphate. Its function is as follows. DNA-dependent RNA polymerase catalyzes the transcription of DNA into RNA using the four ribonucleoside triphosphates as substrates. The protein is DNA-directed RNA polymerase subunit beta' of Cutibacterium acnes (strain DSM 16379 / KPA171202) (Propionibacterium acnes).